The chain runs to 590 residues: Arginine--tRNA ligase (590 aa).

Positions 130–140 match the 'HIGH' region motif; that stretch reads PNIAKEMHVGH.

This sequence belongs to the class-I aminoacyl-tRNA synthetase family. Monomer.

It is found in the cytoplasm. It carries out the reaction tRNA(Arg) + L-arginine + ATP = L-arginyl-tRNA(Arg) + AMP + diphosphate. The chain is Arginine--tRNA ligase from Synechococcus sp. (strain CC9311).